The primary structure comprises 121 residues: Neuromedin-B (121 aa).

The first 24 residues, 1 to 24 (MTLRARGARLLGGLLFFTLLAAGA), serve as a signal peptide directing secretion. The residue at position 56 (Met-56) is a Methionine amide. The propeptide occupies 60-121 (SLEPPNPSLL…RRLLVQTLEK (62 aa)).

It belongs to the bombesin/neuromedin-B/ranatensin family. In terms of tissue distribution, higher expression in the central nervous system (CNS) than in peripheral tissues. Highest levels are found in the olfactory bulb. Relatively high levels in the CNS (including the cerebral cortex, cerebellum, spinal cord, medulla oblongata, midbrain, hypothalamus, hippocampus, and hypophysis) and in peripheral tissues such as the pancreas, adrenal gland, testis, ovary and cecum. Moderate levels are found in the rectum, heart and pons with low expression levels detected in the bone marrow and duodenum. Other tissues show no or low levels of expression.

The protein localises to the secreted. It localises to the cell projection. The protein resides in the neuron projection. In terms of biological role, stimulates smooth muscle contraction. Induces sighing by acting directly on the pre-Botzinger complex, a cluster of several thousand neurons in the ventrolateral medulla responsible for inspiration during respiratory activity. Contributes to the induction of sneezing following exposure to chemical irritants or allergens which causes release of NMB by nasal sensory neurons and activation of NMBR-expressing neurons in the sneeze-evoking region of the brainstem. These in turn activate neurons of the caudal ventral respiratory group, giving rise to the sneezing response. Contributes to induction of acute itch, possibly through activation of the NMBR receptor on dorsal root ganglion neurons. Increases expression of NMBR and steroidogenic mediators STAR, CYP11A1 and HSD3B1 in Leydig cells, induces secretion of testosterone by Leydig cells and also promotes Leydig cell proliferation. Plays a role in the innate immune response to influenza A virus infection by enhancing interferon alpha expression and reducing expression of IL6. Plays a role in CSF1-induced proliferation of osteoclast precursors by contributing to positive regulation of the expression of the CSF1 receptor CSF1R. This chain is Neuromedin-B (NMB), found in Sus scrofa (Pig).